We begin with the raw amino-acid sequence, 352 residues long: Nuclear receptor subfamily 1 group I member 3 (352 aa).

The segment at residues 8–83 (LRNCVVCGDQ…AGMRKDMILS (76 aa)) is a DNA-binding region (nuclear receptor). The NR C4-type zinc finger occupies 11 to 31 (CVVCGDQATGYHFNALTCEGC). At Thr38 the chain carries Phosphothreonine; by PKC. The NR C4-type zinc-finger motif lies at 47-71 (CPFAGSCEVSKIQRRHCPACRLQKC). In terms of domain architecture, NR LBD spans 109-352 (EQEELIQTLL…MMPLLQEICS (244 aa)).

It belongs to the nuclear hormone receptor family. NR1 subfamily. Heterodimer of NR1I3 and RXR. Interacts with PSMC4. Interacts with ECT2. Directly interacts with DNAJC7; this complex may also include HSP90. Interacts with CRY1. Interacts with CRY2 in a ligand-dependent manner. Post-translationally, phosphorylated at Thr-38 by PKC, dephosphorylation of Thr-38 is required for nuclear translocation and activation.

It is found in the nucleus. The protein resides in the cytoplasm. Its subcellular location is the cytoskeleton. Its function is as follows. Binds and transactivates the retinoic acid response elements that control expression of the retinoic acid receptor beta 2 and alcohol dehydrogenase 3 genes. Transactivates both the phenobarbital responsive element module of the human CYP2B6 gene and the CYP3A4 xenobiotic response element. This chain is Nuclear receptor subfamily 1 group I member 3 (NR1I3), found in Macaca mulatta (Rhesus macaque).